Here is a 530-residue protein sequence, read N- to C-terminus: 5-aminolevulinate synthase, mitochondrial (530 aa).

The transit peptide at 1–26 (MFRPVLKVRPSFSYPYSIVSSRSVRL) directs the protein to the mitochondrion. Residues arginine 73, serine 186, and lysine 205 each contribute to the substrate site. Positions 238, 266, and 316 each coordinate pyridoxal 5'-phosphate. Lysine 319 is a catalytic residue. Lysine 319 carries the N6-(pyridoxal phosphate)lysine modification. Threonine 348 and threonine 349 together coordinate pyridoxal 5'-phosphate. Threonine 434 is a binding site for substrate.

This sequence belongs to the class-II pyridoxal-phosphate-dependent aminotransferase family. As to quaternary structure, homodimer. Pyridoxal 5'-phosphate is required as a cofactor.

It is found in the mitochondrion matrix. The enzyme catalyses succinyl-CoA + glycine + H(+) = 5-aminolevulinate + CO2 + CoA. Its pathway is porphyrin-containing compound metabolism; protoporphyrin-IX biosynthesis; 5-aminolevulinate from glycine: step 1/1. In terms of biological role, catalyzes the synthesis of 5-aminolevulinate (ALA) from succinyl-CoA and glycine, the first and rate-limiting step in heme biosynthesis. The polypeptide is 5-aminolevulinate synthase, mitochondrial (HEM1) (Candida glabrata (strain ATCC 2001 / BCRC 20586 / JCM 3761 / NBRC 0622 / NRRL Y-65 / CBS 138) (Yeast)).